The chain runs to 133 residues: Small ribosomal subunit protein uS8 (133 aa).

This sequence belongs to the universal ribosomal protein uS8 family. Part of the 30S ribosomal subunit. Contacts proteins S5 and S12.

One of the primary rRNA binding proteins, it binds directly to 16S rRNA central domain where it helps coordinate assembly of the platform of the 30S subunit. The protein is Small ribosomal subunit protein uS8 of Synechococcus sp. (strain RCC307).